Reading from the N-terminus, the 229-residue chain is Zinc finger matrin-type protein 4 (229 aa).

4 Matrin-type zinc fingers span residues 14-44 (SYCKVCSAQLISESQRVAHYESRKHASKVRL), 72-106 (DKNKCCTLCNMSFTSAVVADSHYQGKIHAKRLKLL), 145-175 (RYCGLCAAWFNNPLMAQQHYEGKKHKKNAAR), and 198-228 (YRCTTCSVSLNSIEQYHAHLQGSKHQTNLKN).

It is found in the nucleus. The polypeptide is Zinc finger matrin-type protein 4 (Zmat4) (Mus musculus (Mouse)).